Consider the following 405-residue polypeptide: Corticosteroid-binding globulin (405 aa).

The N-terminal stretch at 1 to 22 (MPLLLYTCLLWLPTSGLWTVQA) is a signal peptide. N-linked (GlcNAc...) asparagine glycans are attached at residues Asn-31, Asn-96, and Asn-176. Gln-254 contributes to the cortisol binding site. Asn-260 carries N-linked (GlcNAc...) asparagine glycosylation. Residue Asn-286 coordinates cortisol. Asn-330 and Asn-369 each carry an N-linked (GlcNAc...) asparagine glycan. Cortisol-binding residues include His-390 and Trp-393.

This sequence belongs to the serpin family. N-glycosylated; binds 5 oligosaccharide chains. Post-translationally, glycosylation in position Asn-260 is needed for steroid binding. As to expression, plasma; synthesized in liver. Has also been identified in a number of glycocorticoid responsive cells.

The protein resides in the secreted. In terms of biological role, major transport protein for glucocorticoids and progestins in the blood of almost all vertebrate species. This chain is Corticosteroid-binding globulin (SERPINA6), found in Homo sapiens (Human).